Consider the following 179-residue polypeptide: Replication restart protein DnaT (179 aa).

A disordered region spans residues 156-179; that stretch reads GGLPKRDVNTVSEPDSQIPPGFRG.

Belongs to the DnaT family. As to quaternary structure, homooligomerizes. Interacts with PriB. Component of the replication restart primosome. Primosome assembly occurs via a 'hand-off' mechanism. PriA binds to replication forks, subsequently PriB then DnaT bind; DnaT then displaces ssDNA to generate the helicase loading substrate.

Functionally, involved in the restart of stalled replication forks, which reloads the replicative helicase on sites other than the origin of replication. Can function in multiple replication restart pathways. Displaces ssDNA from a PriB-ssDNA complex. Probably forms a spiral filament on ssDNA. The sequence is that of Replication restart protein DnaT from Shigella boydii serotype 18 (strain CDC 3083-94 / BS512).